A 166-amino-acid polypeptide reads, in one-letter code: Protein E6 (166 aa).

Zinc fingers lie at residues 50-86 (CNFCGKFLSHLEACEFDDKRLSLIWKGHLVYACCRWC) and 123-159 (CQNCMRYLDSIEKLDICGRRLPFHKVRDSWKGICRLC).

Belongs to the papillomaviridae E6 protein family. As to quaternary structure, forms homodimers. Interacts with ubiquitin-protein ligase UBE3A/E6-AP; this interaction stimulates UBE3A ubiquitin activity. Interacts with host BAK1.

The protein localises to the host cytoplasm. It is found in the host nucleus. In terms of biological role, plays a major role in the induction and maintenance of cellular transformation. E6 associates with host UBE3A/E6-AP ubiquitin-protein ligase and modulates its activity. Protects host keratinocytes from apoptosis by mediating the degradation of host BAK1. May also inhibit host immune response. The chain is Protein E6 from Homo sapiens (Human).